Here is a 436-residue protein sequence, read N- to C-terminus: Methylenetetrahydrofolate--tRNA-(uracil-5-)-methyltransferase TrmFO (436 aa).

7-12 serves as a coordination point for FAD; sequence GAGLAG.

The protein belongs to the MnmG family. TrmFO subfamily. Requires FAD as cofactor.

It is found in the cytoplasm. It carries out the reaction uridine(54) in tRNA + (6R)-5,10-methylene-5,6,7,8-tetrahydrofolate + NADH + H(+) = 5-methyluridine(54) in tRNA + (6S)-5,6,7,8-tetrahydrofolate + NAD(+). It catalyses the reaction uridine(54) in tRNA + (6R)-5,10-methylene-5,6,7,8-tetrahydrofolate + NADPH + H(+) = 5-methyluridine(54) in tRNA + (6S)-5,6,7,8-tetrahydrofolate + NADP(+). Catalyzes the folate-dependent formation of 5-methyl-uridine at position 54 (M-5-U54) in all tRNAs. This Caldicellulosiruptor bescii (strain ATCC BAA-1888 / DSM 6725 / KCTC 15123 / Z-1320) (Anaerocellum thermophilum) protein is Methylenetetrahydrofolate--tRNA-(uracil-5-)-methyltransferase TrmFO.